Reading from the N-terminus, the 415-residue chain is Alpha-N-acetylgalactosaminidase (415 aa).

Positions 1 to 17 (MLQKTVLLLALVAQVLM) are cleaved as a signal peptide. 3 disulfides stabilise this stretch: cysteine 38/cysteine 80, cysteine 42/cysteine 49, and cysteine 127/cysteine 158. Residues 78–79 (DD) and lysine 154 each bind substrate. Aspartate 156 functions as the Nucleophile in the catalytic mechanism. N-linked (GlcNAc...) asparagine glycosylation is present at asparagine 177. A disulfide bond links cysteine 187 and cysteine 209. Serine 188 is a substrate binding site. N-linked (GlcNAc...) asparagine glycosylation occurs at asparagine 201. The substrate site is built by arginine 213 and aspartate 217. Catalysis depends on aspartate 217, which acts as the Proton donor. 2 positions are modified to phosphoserine: serine 322 and serine 332. N-linked (GlcNAc...) asparagine glycosylation is present at asparagine 385.

Belongs to the glycosyl hydrolase 27 family. Homodimer.

The protein localises to the lysosome. The catalysed reaction is Cleavage of non-reducing alpha-(1-&gt;3)-N-acetylgalactosamine residues from human blood group A and AB mucin glycoproteins, Forssman hapten and blood group A lacto series glycolipids.. The enzyme catalyses a neolactoside IV(3)-alpha-GalNAc,IV(2)-alpha-Fuc-nLc4Cer(d18:1(4E)) + H2O = a neolactoside IV(2)-alpha-Fuc-nLc4Cer(d18:1(4E)) + N-acetyl-alpha-D-galactosamine. It catalyses the reaction a neolactoside IV(3)-alpha-GalNAc,IV(2)-alpha-Fuc-nLc4Cer(d18:0) + H2O = a neolactoside IV(2)-alpha-Fuc-nLc4Cer(d18:0) + N-acetyl-alpha-D-galactosamine. It carries out the reaction a globoside IV3GalNAc-Gb4Cer + H2O = N-acetyl-alpha-D-galactosamine + a globoside Gb4Cer. Functionally, removes terminal alpha-N-acetylgalactosamine residues from glycolipids and glycopeptides. Required for the breakdown of glycolipids. The sequence is that of Alpha-N-acetylgalactosaminidase (Naga) from Mus musculus (Mouse).